The chain runs to 286 residues: Interferon-induced 35 kDa protein homolog (286 aa).

Residues 5 to 26 form a leucine-zipper region; that stretch reads LQTVLYSLQEEQARLKMRLQEL. NID domains follow at residues 81–170 and 183–266; these read ALVT…GDVE and FADE…GEVE.

It belongs to the NMI family. Homodimer. Also interacts with B-ATF. Interacts with TRIM21. Interacts (via NID domains) with NMI (via NID domains); the interaction is direct and is facilitated by TRIM21. Phosphorylated. Dephosphorylation correlates with the formation of a complex with NMI.

The protein localises to the cytoplasm. Its subcellular location is the nucleus. It is found in the secreted. Functionally, acts as a signaling pathway regulator involved in innate immune system response. In response to interferon IFN-alpha, associates in a complex with transcriptional regulator NMI to regulate immune response; the complex formation prevents proteasome-mediated degradation of IFI35 and correlates with IFI35 dephosphorylation. In complex with NMI, inhibits virus-triggered type I interferon/IFN-beta production. In complex with NMI, negatively regulates nuclear factor NF-kappa-B signaling by inhibiting the nuclear translocation, activation and transcription of the NF-kappa-B subunit p65/RELA, resulting in the inhibition of endothelial cell proliferation, migration and re-endothelialization of injured arteries. Beside its role as an intracellular signaling pathway regulator, also functions extracellularly as damage-associated molecular patterns (DAMPs) to promote inflammation when actively released by macrophage to the extracellular space during cell injury and pathogen invasion. Macrophage-secreted IFI35 activates NF-kappa-B signaling in adjacent macrophages through Toll-like receptor 4/TLR4 activation, thereby inducing NF-kappa-B translocation from the cytoplasm into the nucleus which promotes the release of pro-inflammatory cytokines. This is Interferon-induced 35 kDa protein homolog from Mus musculus (Mouse).